The primary structure comprises 338 residues: Phenylalanine--tRNA ligase alpha subunit (338 aa).

E253 serves as a coordination point for Mg(2+).

It belongs to the class-II aminoacyl-tRNA synthetase family. Phe-tRNA synthetase alpha subunit type 1 subfamily. As to quaternary structure, tetramer of two alpha and two beta subunits. The cofactor is Mg(2+).

It is found in the cytoplasm. It catalyses the reaction tRNA(Phe) + L-phenylalanine + ATP = L-phenylalanyl-tRNA(Phe) + AMP + diphosphate + H(+). The protein is Phenylalanine--tRNA ligase alpha subunit of Syntrophotalea carbinolica (strain DSM 2380 / NBRC 103641 / GraBd1) (Pelobacter carbinolicus).